We begin with the raw amino-acid sequence, 416 residues long: Probable mannose-6-phosphate isomerase (416 aa).

Residues Q99, H101, E126, and H259 each coordinate Zn(2+). Residue R278 is part of the active site.

Belongs to the mannose-6-phosphate isomerase type 1 family. Zn(2+) is required as a cofactor.

It is found in the cytoplasm. It catalyses the reaction D-mannose 6-phosphate = D-fructose 6-phosphate. The protein operates within nucleotide-sugar biosynthesis; GDP-alpha-D-mannose biosynthesis; alpha-D-mannose 1-phosphate from D-fructose 6-phosphate: step 1/2. Functionally, involved in the synthesis of the GDP-mannose and dolichol-phosphate-mannose required for a number of critical mannosyl transfer reactions. In Caenorhabditis elegans, this protein is Probable mannose-6-phosphate isomerase.